Consider the following 166-residue polypeptide: Phospholipase A2 inhibitor CgMIP-II (166 aa).

The N-terminal stretch at 1-19 is a signal peptide; the sequence is MRLILLSGLLLLGTFLANG. The C-type lectin domain occupies 46 to 161; it reads LRYALMTVHN…CDDNLLVVCE (116 aa). Cystine bridges form between C83-C160 and C138-C152. Residue N122 is glycosylated (N-linked (GlcNAc...) asparagine).

It belongs to the alpha-type phospholipase A2 inhibitor family. In terms of assembly, homomer composed of 20-25-kDa subunits that form oligomers of 180 kDa. N-glycosylated. The glycosidic chain may contain superficial sialic acid residues. Expressed by the liver.

It localises to the secreted. Functionally, selectively inhibits the toxic properties of myotoxin-II from the same venom (AC P81165). Does not inhibit PLA2, anti-coagulant and lethal activities of the basic myotoxin I from the same venom (AC P0DQP6), nor the different crotoxin forms (heterodimer or subunit B alone). Does not block the enzymatic activity of crude acidic PLA2 fractions from the same venom. This chain is Phospholipase A2 inhibitor CgMIP-II, found in Cerrophidion godmani (Porthidium godmani).